The following is a 77-amino-acid chain: Acyl carrier protein (77 aa).

In terms of domain architecture, Carrier spans Ser2 to Gln77. Ser37 bears the O-(pantetheine 4'-phosphoryl)serine mark.

This sequence belongs to the acyl carrier protein (ACP) family. 4'-phosphopantetheine is transferred from CoA to a specific serine of apo-ACP by AcpS. This modification is essential for activity because fatty acids are bound in thioester linkage to the sulfhydryl of the prosthetic group.

It localises to the cytoplasm. The protein operates within lipid metabolism; fatty acid biosynthesis. Its function is as follows. Carrier of the growing fatty acid chain in fatty acid biosynthesis. The sequence is that of Acyl carrier protein from Hahella chejuensis (strain KCTC 2396).